The sequence spans 103 residues: Large ribosomal subunit protein bL21 (103 aa).

It belongs to the bacterial ribosomal protein bL21 family. Part of the 50S ribosomal subunit. Contacts protein L20.

This protein binds to 23S rRNA in the presence of protein L20. This is Large ribosomal subunit protein bL21 from Albidiferax ferrireducens (strain ATCC BAA-621 / DSM 15236 / T118) (Rhodoferax ferrireducens).